A 570-amino-acid chain; its full sequence is Urease subunit alpha (570 aa).

The Urease domain maps to 135 to 570 (GGLDIHVHFN…ELPLAQRYHL (436 aa)). Ni(2+)-binding residues include His-140, His-142, and Lys-219. An N6-carboxylysine modification is found at Lys-219. Residue His-221 coordinates substrate. Residues His-248 and His-274 each contribute to the Ni(2+) site. His-322 serves as the catalytic Proton donor. Asp-362 contributes to the Ni(2+) binding site.

This sequence belongs to the metallo-dependent hydrolases superfamily. Urease alpha subunit family. As to quaternary structure, heterotrimer of UreA (gamma), UreB (beta) and UreC (alpha) subunits. Three heterotrimers associate to form the active enzyme. Ni cation is required as a cofactor. In terms of processing, carboxylation allows a single lysine to coordinate two nickel ions.

The protein localises to the cytoplasm. It carries out the reaction urea + 2 H2O + H(+) = hydrogencarbonate + 2 NH4(+). It participates in nitrogen metabolism; urea degradation; CO(2) and NH(3) from urea (urease route): step 1/1. The polypeptide is Urease subunit alpha (Natronomonas pharaonis (strain ATCC 35678 / DSM 2160 / CIP 103997 / JCM 8858 / NBRC 14720 / NCIMB 2260 / Gabara) (Halobacterium pharaonis)).